The sequence spans 526 residues: CTP synthase (526 aa).

The interval 1 to 264 is amidoligase domain; it reads MPQRFIVVTG…HKLIAKELDI (264 aa). S14 lines the CTP pocket. Residue S14 participates in UTP binding. ATP-binding positions include 15 to 20 and D72; that span reads GIGKGI. Mg(2+) contacts are provided by D72 and E138. Residues 145–147, 185–190, and K221 each bind CTP; these read DIE and KTKPTQ. Residues 185-190 and K221 each bind UTP; that span reads KTKPTQ. The region spanning 282 to 526 is the Glutamine amidotransferase type-1 domain; the sequence is KIGIVGKYLG…VKAAGGKIND (245 aa). G342 is a binding site for L-glutamine. Catalysis depends on C369, which acts as the Nucleophile; for glutamine hydrolysis. L-glutamine-binding positions include 370–373, E393, and R451; that span reads LGMQ. Catalysis depends on residues H499 and E501.

This sequence belongs to the CTP synthase family. Homotetramer.

The catalysed reaction is UTP + L-glutamine + ATP + H2O = CTP + L-glutamate + ADP + phosphate + 2 H(+). The enzyme catalyses L-glutamine + H2O = L-glutamate + NH4(+). It catalyses the reaction UTP + NH4(+) + ATP = CTP + ADP + phosphate + 2 H(+). It participates in pyrimidine metabolism; CTP biosynthesis via de novo pathway; CTP from UDP: step 2/2. Allosterically activated by GTP, when glutamine is the substrate; GTP has no effect on the reaction when ammonia is the substrate. The allosteric effector GTP functions by stabilizing the protein conformation that binds the tetrahedral intermediate(s) formed during glutamine hydrolysis. Inhibited by the product CTP, via allosteric rather than competitive inhibition. Functionally, catalyzes the ATP-dependent amination of UTP to CTP with either L-glutamine or ammonia as the source of nitrogen. Regulates intracellular CTP levels through interactions with the four ribonucleotide triphosphates. This is CTP synthase from Thermosipho africanus (strain TCF52B).